The primary structure comprises 1193 residues: Falcilysin (1193 aa).

A Zn(2+)-binding site is contributed by His-129. Glu-132 serves as the catalytic Proton acceptor. Zn(2+) contacts are provided by His-133 and Glu-243. The segment at 376-404 (DKTNNHNNNHSNNQSSENNGYSNGSHSSD) is disordered. Residues 380-394 (NHNNNHSNNQSSENN) show a composition bias toward low complexity. The span at 395–404 (GYSNGSHSSD) shows a compositional bias: polar residues. Positions 583-619 (LLEGDENYAQEQENLEKQELKKRIENFNEQEKEQVIK) form a coiled coil.

This sequence belongs to the peptidase M16 family. Monomer. Component of the hemozoin formation complex (HFC) composed of falcipains FP2A and/or FP2B, plasmepsins PMII, PMIII/HAP and PMIV, heme detoxifying protein HDP and falcilysin FLN. The HFC complex is involved in hemoglobin degradation and detoxification of heme in the food vacuole during the asexual blood stage. Requires Zn(2+) as cofactor. Does not require processing for targeting to the food vacuole or maturation.

It is found in the vacuole membrane. The protein resides in the plastid. It localises to the apicoplast. The protein localises to the vesicle. Functionally, in the food vacuole, acts downstream of proteases plasmepsins PMI and PMII and falcipains during the catabolism of host hemoglobin by cleaving peptide fragments of alpha and beta hemoglobin subunits generated by PMI and PMII and falcipains. In the apicoplast, degrades apicoplast transit peptides after their cleavage. Prefers bulky hydrophobic amino acids in the P1' position at both acidic and neutral pH. At P2', prefers hydrophobic residues at acidic pH; at neutral pH, these same residues are abundant but prefers Arg. At P3', prefers hydrophobic residues, especially Met, at both pH conditions. At P4' and P5', prefers acidic residues at acidic pH, however, at neutral pH, the enzyme is less selective at these positions. The optimal site cleavage at acidic pH is YNEHS-|-FFMEE and, at neutral pH, MKRHS-|-FRMRG. This Plasmodium falciparum (isolate 3D7) protein is Falcilysin.